Reading from the N-terminus, the 100-residue chain is Urease subunit gamma (100 aa).

This sequence belongs to the urease gamma subunit family. Heterotrimer of UreA (gamma), UreB (beta) and UreC (alpha) subunits. Three heterotrimers associate to form the active enzyme.

It is found in the cytoplasm. It carries out the reaction urea + 2 H2O + H(+) = hydrogencarbonate + 2 NH4(+). Its pathway is nitrogen metabolism; urea degradation; CO(2) and NH(3) from urea (urease route): step 1/1. The polypeptide is Urease subunit gamma (Agrobacterium fabrum (strain C58 / ATCC 33970) (Agrobacterium tumefaciens (strain C58))).